The chain runs to 341 residues: Ketol-acid reductoisomerase (NADP(+)) (341 aa).

The region spanning 3–184 is the KARI N-terminal Rossmann domain; that stretch reads LKVYYDKDCD…GGGRSGIIET (182 aa). NADP(+)-binding positions include 26–29, S54, and 84–87; these read FGSQ and DELQ. H109 is an active-site residue. G135 is a binding site for NADP(+). In terms of domain architecture, KARI C-terminal knotted spans 185 to 330; that stretch reads TFKDETETDL…GRLRAMMPWI (146 aa). Mg(2+) is bound by residues D193, E197, E229, and E233. Residue S254 coordinates substrate.

This sequence belongs to the ketol-acid reductoisomerase family. The cofactor is Mg(2+).

It catalyses the reaction (2R)-2,3-dihydroxy-3-methylbutanoate + NADP(+) = (2S)-2-acetolactate + NADPH + H(+). The catalysed reaction is (2R,3R)-2,3-dihydroxy-3-methylpentanoate + NADP(+) = (S)-2-ethyl-2-hydroxy-3-oxobutanoate + NADPH + H(+). Its pathway is amino-acid biosynthesis; L-isoleucine biosynthesis; L-isoleucine from 2-oxobutanoate: step 2/4. It functions in the pathway amino-acid biosynthesis; L-valine biosynthesis; L-valine from pyruvate: step 2/4. In terms of biological role, involved in the biosynthesis of branched-chain amino acids (BCAA). Catalyzes an alkyl-migration followed by a ketol-acid reduction of (S)-2-acetolactate (S2AL) to yield (R)-2,3-dihydroxy-isovalerate. In the isomerase reaction, S2AL is rearranged via a Mg-dependent methyl migration to produce 3-hydroxy-3-methyl-2-ketobutyrate (HMKB). In the reductase reaction, this 2-ketoacid undergoes a metal-dependent reduction by NADPH to yield (R)-2,3-dihydroxy-isovalerate. This Helicobacter hepaticus (strain ATCC 51449 / 3B1) protein is Ketol-acid reductoisomerase (NADP(+)).